A 185-amino-acid chain; its full sequence is MATPWRCALLMILASQVVILVKCLEDDDVPEEWLLLHVVQGQIGAGNYSYLRLNHEGKIILRMQSLRGDADLYVSDSTPHPSFDEYELQSVTCGQDVVSIPAHFQRPVGIGIYGHPSHHESDFEMRVYYDRTVDQYPFGEAAYAADQTGTSQKQAYTPEEAAQEEESVLWTILISILKLVLEILF.

The signal sequence occupies residues 1–23; sequence MATPWRCALLMILASQVVILVKC. Residue Asn-47 is glycosylated (N-linked (GlcNAc...) asparagine).

Belongs to the UPF0669 family.

The protein localises to the secreted. Functionally, may be involved in induction of apoptosis in CD4(+) T-cells, but not CD8(+) T-cells or hepatocytes. In Rattus norvegicus (Rat), this protein is UPF0669 protein C6orf120 homolog.